The primary structure comprises 85 residues: uncharacterized protein (85 aa).

Residues 39-59 form a helical membrane-spanning segment; the sequence is FILFEISMYIIFIVTFCYKII.

Its subcellular location is the host membrane. This is an uncharacterized protein from Gallid herpesvirus 2 (strain Chicken/Md5/ATCC VR-987) (GaHV-2).